We begin with the raw amino-acid sequence, 284 residues long: Pantothenate synthetase (284 aa).

ATP is bound at residue methionine 30–histidine 37. The active-site Proton donor is histidine 37. Glutamine 61 is a (R)-pantoate binding site. Residue glutamine 61 participates in beta-alanine binding. An ATP-binding site is contributed by glycine 147–aspartate 150. Glutamine 153 contacts (R)-pantoate. ATP contacts are provided by residues valine 176 and lysine 184–arginine 187.

Belongs to the pantothenate synthetase family. As to quaternary structure, homodimer.

The protein resides in the cytoplasm. It catalyses the reaction (R)-pantoate + beta-alanine + ATP = (R)-pantothenate + AMP + diphosphate + H(+). It functions in the pathway cofactor biosynthesis; (R)-pantothenate biosynthesis; (R)-pantothenate from (R)-pantoate and beta-alanine: step 1/1. Its function is as follows. Catalyzes the condensation of pantoate with beta-alanine in an ATP-dependent reaction via a pantoyl-adenylate intermediate. This Lysinibacillus sphaericus (strain C3-41) protein is Pantothenate synthetase.